A 702-amino-acid chain; its full sequence is Cell adhesion molecule CEACAM5 (702 aa).

Residues 1–34 (MESPSAPPHRWCIPWQRLLLTASLLTFWNPPTTA) form the signal peptide. The Ig-like V-type domain occupies 35–144 (KLTIESTPFN…TGQFRVYPEL (110 aa)). Residues Asn-104, Asn-115, Asn-152, Asn-182, Asn-197, Asn-204, Asn-208, Asn-246, Asn-256, Asn-274, Asn-288, Asn-292, Asn-309, Asn-330, Asn-351, Asn-360, Asn-375, Asn-432, Asn-466, Asn-480, Asn-508, Asn-529, Asn-553, Asn-560, Asn-580, Asn-612, Asn-650, and Asn-665 are each glycosylated (N-linked (GlcNAc...) asparagine). Ig-like C2-type domains lie at 145 to 232 (PKPS…VILN), 240 to 315 (PTIS…TVTT), 323 to 410 (PKPF…VILN), 418 to 495 (PTIS…KTIT), 501 to 588 (PKPS…VTLD), and 593 to 675 (PDTP…ITVS). A disulfide bridge links Cys-167 with Cys-215. Residues Cys-259 and Cys-299 are joined by a disulfide bond. A disulfide bridge links Cys-345 with Cys-393. A disulfide bond links Cys-437 and Cys-477. Cys-523 and Cys-571 are joined by a disulfide. The cysteines at positions 615 and 655 are disulfide-linked. The GPI-anchor amidated alanine moiety is linked to residue Ala-685. Residues 686–702 (GATVGIMIGVLVGVALI) constitute a propeptide, removed in mature form.

It belongs to the immunoglobulin superfamily. CEA family. As to quaternary structure, homodimer. In terms of processing, complex immunoreactive glycoprotein with a MW of 180 kDa comprising 60% carbohydrate. In terms of tissue distribution, expressed in columnar epithelial and goblet cells of the colon (at protein level). Found in adenocarcinomas of endodermally derived digestive system epithelium and fetal colon.

It is found in the cell membrane. It localises to the apical cell membrane. The protein localises to the cell surface. Its function is as follows. Cell surface glycoprotein that plays a role in cell adhesion, intracellular signaling and tumor progression. Mediates homophilic and heterophilic cell adhesion with other carcinoembryonic antigen-related cell adhesion molecules, such as CEACAM6. Plays a role as an oncogene by promoting tumor progression; induces resistance to anoikis of colorectal carcinoma cells. In terms of biological role, (Microbial infection) Receptor for E.coli Dr adhesins. Binding of E.coli Dr adhesins leads to dissociation of the homodimer. This is Cell adhesion molecule CEACAM5 from Homo sapiens (Human).